The primary structure comprises 636 residues: DNA ligase (636 aa).

Lys113 acts as the N6-AMP-lysine intermediate in catalysis. A BRCT domain is found at 560–636; sequence NSEGIFQNQT…KSSFSKKFEK (77 aa).

It belongs to the NAD-dependent DNA ligase family.

The enzyme catalyses NAD(+) + (deoxyribonucleotide)n-3'-hydroxyl + 5'-phospho-(deoxyribonucleotide)m = (deoxyribonucleotide)n+m + AMP + beta-nicotinamide D-nucleotide.. Functionally, catalyzes the formation of phosphodiester linkages between 5'-phosphoryl and 3'-hydroxyl groups in double-stranded DNA using NAD as a coenzyme and as the energy source for the reaction. The polypeptide is DNA ligase (Acanthamoeba polyphaga (Amoeba)).